The following is a 113-amino-acid chain: MSLSTEKKAAIVAEFGRDAKDTGSSEVQIALLTAQINHLQAHFAEHKKDHHGRRGLLRMVSRRRKLLDYLKRTDLALYQSTIARLGLRRLIFYYDSKKSSPRILRAFLWGCTR.

This sequence belongs to the universal ribosomal protein uS15 family. In terms of assembly, part of the 30S ribosomal subunit. Forms a bridge to the 50S subunit in the 70S ribosome, contacting the 23S rRNA.

In terms of biological role, one of the primary rRNA binding proteins, it binds directly to 16S rRNA where it helps nucleate assembly of the platform of the 30S subunit by binding and bridging several RNA helices of the 16S rRNA. Forms an intersubunit bridge (bridge B4) with the 23S rRNA of the 50S subunit in the ribosome. The protein is Small ribosomal subunit protein uS15 of Haemophilus influenzae (strain PittEE).